The following is a 381-amino-acid chain: 3-isopropylmalate dehydrogenase (381 aa).

Residues arginine 104, arginine 114, arginine 142, and aspartate 232 each contribute to the substrate site. Residues aspartate 232, aspartate 256, and aspartate 260 each contribute to the Mg(2+) site. 290–302 (GSAPDIAGQDKAN) provides a ligand contact to NAD(+).

The protein belongs to the isocitrate and isopropylmalate dehydrogenases family. LeuB type 1 subfamily. In terms of assembly, homodimer. The cofactor is Mg(2+). It depends on Mn(2+) as a cofactor.

The protein localises to the cytoplasm. The enzyme catalyses (2R,3S)-3-isopropylmalate + NAD(+) = 4-methyl-2-oxopentanoate + CO2 + NADH. The protein operates within amino-acid biosynthesis; L-leucine biosynthesis; L-leucine from 3-methyl-2-oxobutanoate: step 3/4. Its function is as follows. Catalyzes the oxidation of 3-carboxy-2-hydroxy-4-methylpentanoate (3-isopropylmalate) to 3-carboxy-4-methyl-2-oxopentanoate. The product decarboxylates to 4-methyl-2 oxopentanoate. The chain is 3-isopropylmalate dehydrogenase from Synechococcus sp. (strain JA-3-3Ab) (Cyanobacteria bacterium Yellowstone A-Prime).